Consider the following 147-residue polypeptide: Hemoglobin subunit beta (147 aa).

The Globin domain occupies 3–147; that stretch reads HWTAEEKQII…VAHALARKYH (145 aa). Positions 64 and 93 each coordinate heme b.

As to quaternary structure, heterotetramer of two alpha (or alpha-D) and two beta chains. In terms of tissue distribution, red blood cells.

Functionally, involved in oxygen transport from the lung to the various peripheral tissues. The beta chain is a component of adult hemoglobin A and D. The polypeptide is Hemoglobin subunit beta (Aythya fuligula (Tufted duck)).